We begin with the raw amino-acid sequence, 210 residues long: Protein PF1979 (210 aa).

The region spanning 7–201 is the AMMECR1 domain; that stretch reads EWGEFLVRLA…EEYPRGPVKR (195 aa).

This Pyrococcus furiosus (strain ATCC 43587 / DSM 3638 / JCM 8422 / Vc1) protein is Protein PF1979.